A 566-amino-acid chain; its full sequence is ATP-dependent RNA helicase DBP3 (566 aa).

The segment at 1–139 (MSAGKKHARD…TTPNGSAQRN (139 aa)) is disordered. Residues 39 to 58 (DKKKKDKKDKKERKEKKEKK) show a composition bias toward basic residues. The segment covering 81–91 (SEPKPEKEKKE) has biased composition (basic and acidic residues). A compositionally biased stretch (basic residues) spans 92–102 (KNNKKDKKDKK). Residues 127–139 (AATTTPNGSAQRN) are compositionally biased toward polar residues. A Q motif motif is present at residues 182-209 (IHFSHLPTSTLTSKKPFASFTAPTPIQA). Residues 212–396 (WPFALSGRDV…EGFMIDPVKA (185 aa)) enclose the Helicase ATP-binding domain. Residue 225–232 (AETGSGKT) participates in ATP binding. The short motif at 342–345 (DEAD) is the DEAD box element. The Helicase C-terminal domain maps to 433–566 (GKEQRLLELL…TEHDKSHSGS (134 aa)).

This sequence belongs to the DEAD box helicase family. DDX5/DBP2 subfamily.

The protein resides in the nucleus. It localises to the nucleolus. It carries out the reaction ATP + H2O = ADP + phosphate + H(+). In terms of biological role, ATP-dependent RNA helicase required for 60S ribosomal subunit synthesis. Involved in efficient pre-rRNA processing, predominantly at site A3, which is necessary for the normal formation of 25S and 5.8S rRNAs. The chain is ATP-dependent RNA helicase DBP3 (DBP3) from Chaetomium globosum (strain ATCC 6205 / CBS 148.51 / DSM 1962 / NBRC 6347 / NRRL 1970) (Soil fungus).